The chain runs to 1093 residues: Mediator of RNA polymerase II transcription subunit 14 (1093 aa).

2 disordered regions span residues 1 to 61 (MPGV…KIDG) and 1035 to 1060 (TKSDQDYSTQPVPEKQSQTGAPSQAA). Residues 19-31 (DTQTPSNGDNLRN) show a composition bias toward polar residues. Residues 41-61 (KGDKDHDPDKESYTGKPKIDG) show a composition bias toward basic and acidic residues. The segment covering 1040–1056 (DYSTQPVPEKQSQTGAP) has biased composition (polar residues).

This sequence belongs to the Mediator complex subunit 14 family. Component of the Mediator complex.

The protein resides in the nucleus. In terms of biological role, component of the Mediator complex, a coactivator involved in the regulated transcription of nearly all RNA polymerase II-dependent genes. Mediator functions as a bridge to convey information from gene-specific regulatory proteins to the basal RNA polymerase II transcription machinery. Mediator is recruited to promoters by direct interactions with regulatory proteins and serves as a scaffold for the assembly of a functional preinitiation complex with RNA polymerase II and the general transcription factors. The chain is Mediator of RNA polymerase II transcription subunit 14 (rgr1) from Neosartorya fischeri (strain ATCC 1020 / DSM 3700 / CBS 544.65 / FGSC A1164 / JCM 1740 / NRRL 181 / WB 181) (Aspergillus fischerianus).